Here is a 330-residue protein sequence, read N- to C-terminus: Anthranilate phosphoribosyltransferase (330 aa).

5-phospho-alpha-D-ribose 1-diphosphate-binding positions include Gly75, 78–79 (GD), Thr83, 85–88 (NVST), 103–111 (KHGNRAASS), and Ala115. Residue Gly75 participates in anthranilate binding. Ser87 is a Mg(2+) binding site. Asn106 is an anthranilate binding site. Arg161 contributes to the anthranilate binding site. Residues Asp220 and Glu221 each contribute to the Mg(2+) site.

The protein belongs to the anthranilate phosphoribosyltransferase family. In terms of assembly, homodimer. The cofactor is Mg(2+).

The catalysed reaction is N-(5-phospho-beta-D-ribosyl)anthranilate + diphosphate = 5-phospho-alpha-D-ribose 1-diphosphate + anthranilate. It participates in amino-acid biosynthesis; L-tryptophan biosynthesis; L-tryptophan from chorismate: step 2/5. Its function is as follows. Catalyzes the transfer of the phosphoribosyl group of 5-phosphorylribose-1-pyrophosphate (PRPP) to anthranilate to yield N-(5'-phosphoribosyl)-anthranilate (PRA). The protein is Anthranilate phosphoribosyltransferase of Erythrobacter litoralis (strain HTCC2594).